The sequence spans 319 residues: ATP-dependent 6-phosphofructokinase (319 aa).

Position 11 (G11) interacts with ATP. 21 to 25 (RAVVR) lines the ADP pocket. ATP contacts are provided by residues 72–73 (RC) and 102–105 (GDGS). D103 is a binding site for Mg(2+). 125–127 (TID) provides a ligand contact to substrate. D127 functions as the Proton acceptor in the catalytic mechanism. R154 serves as a coordination point for ADP. Substrate-binding positions include R162 and 169–171 (MGR). ADP is bound by residues 185 to 187 (GAE), K211, and 213 to 215 (KMH). Substrate-binding positions include E222, R243, and 249–252 (HIQR).

This sequence belongs to the phosphofructokinase type A (PFKA) family. ATP-dependent PFK group I subfamily. Prokaryotic clade 'B1' sub-subfamily. In terms of assembly, homotetramer. Requires Mg(2+) as cofactor.

The protein resides in the cytoplasm. It carries out the reaction beta-D-fructose 6-phosphate + ATP = beta-D-fructose 1,6-bisphosphate + ADP + H(+). The protein operates within carbohydrate degradation; glycolysis; D-glyceraldehyde 3-phosphate and glycerone phosphate from D-glucose: step 3/4. Allosterically activated by ADP and other diphosphonucleosides, and allosterically inhibited by phosphoenolpyruvate. Functionally, catalyzes the phosphorylation of D-fructose 6-phosphate to fructose 1,6-bisphosphate by ATP, the first committing step of glycolysis. The chain is ATP-dependent 6-phosphofructokinase from Clostridium botulinum (strain 657 / Type Ba4).